We begin with the raw amino-acid sequence, 479 residues long: MAKENSKIALDIEGYLKEHENKDMLRFLTCGSVDDGKSTLIGRMLYDSKMIFDDQLSAAEGESRKYGTTGEKLDMALLVDGLQSEREQGITIDVAYRFFATEKRKFIIADTPGHEQYTRNMVTGASTADVAIILIDARKGILTQTRRHSFIVNLLGIEHVIVAINKMDLVDFSEEVFDKISGAYGALADELGIKNTYYIPVSALEGDNVVDRSKRSPWFSGQPLLGLLDSMDISKEPKEEDFRFPVQYVNRPNLDFRGFCGTIAAGLVRTGDEITVLPSGKTTKVKNIVNAGDITEKNRETMTEYAYAPMAVTITTEDEVDISRGDMIVHTKNLPRVSNSLKVMLVWMDETPMEPGKTYDIKRATSVVPGFIEHINYKVDINTYEREQVHRLGLNDIASCKMVLTQPIAADAYETNRLTGSFIVVDRISNDTVGAGMIVGVSRREEDVVKLSAKEYTDAERALNLYVRENFPEWECKVI.

The region spanning 22–238 (KDMLRFLTCG…DSMDISKEPK (217 aa)) is the tr-type G domain. Positions 31-38 (GSVDDGKS) are G1. 31–38 (GSVDDGKS) is a binding site for GTP. A G2 region spans residues 89-93 (GITID). The interval 110–113 (DTPG) is G3. Residues 110 to 114 (DTPGH) and 165 to 168 (NKMD) contribute to the GTP site. The interval 165–168 (NKMD) is G4. Positions 202-204 (SAL) are G5.

It belongs to the TRAFAC class translation factor GTPase superfamily. Classic translation factor GTPase family. CysN/NodQ subfamily. As to quaternary structure, heterodimer composed of CysD, the smaller subunit, and CysN.

It catalyses the reaction sulfate + ATP + H(+) = adenosine 5'-phosphosulfate + diphosphate. The protein operates within sulfur metabolism; hydrogen sulfide biosynthesis; sulfite from sulfate: step 1/3. Its function is as follows. With CysD forms the ATP sulfurylase (ATPS) that catalyzes the adenylation of sulfate producing adenosine 5'-phosphosulfate (APS) and diphosphate, the first enzymatic step in sulfur assimilation pathway. APS synthesis involves the formation of a high-energy phosphoric-sulfuric acid anhydride bond driven by GTP hydrolysis by CysN coupled to ATP hydrolysis by CysD. The polypeptide is Sulfate adenylyltransferase subunit 1 (Sulfurovum sp. (strain NBC37-1)).